The primary structure comprises 364 residues: Phosrestin-2 (364 aa).

Belongs to the arrestin family. Phosphorylated, but does not undergo light-induced phosphorylation. As to expression, expressed specifically and abundantly in photoreceptor cells in retina and ocelli.

It localises to the cell projection. The protein resides in the rhabdomere. Functionally, regulates photoreceptor cell deactivation. Arr1 and Arr2 proteins are mediators of rhodopsin inactivation and are essential for the termination of the phototransduction cascade. Involved in regulating normal cycles of per nuclear accumulation in brain circadian neurons and thus is important for normal circadian behavior. In the dark, functions with Arr2 to promote the formation of cytosolic Bdbt foci, which are required for dco localization to photoreceptor nuclei where it phosphorylates and activates degradation of per. The protein is Phosrestin-2 (Arr1) of Drosophila melanogaster (Fruit fly).